A 230-amino-acid polypeptide reads, in one-letter code: Large ribosomal subunit protein uL1 (230 aa).

It belongs to the universal ribosomal protein uL1 family. Part of the 50S ribosomal subunit.

Functionally, binds directly to 23S rRNA. The L1 stalk is quite mobile in the ribosome, and is involved in E site tRNA release. Protein L1 is also a translational repressor protein, it controls the translation of the L11 operon by binding to its mRNA. In Methylobacillus flagellatus (strain ATCC 51484 / DSM 6875 / VKM B-1610 / KT), this protein is Large ribosomal subunit protein uL1.